Reading from the N-terminus, the 154-residue chain is Anaerobic ribonucleoside-triphosphate reductase-activating protein (154 aa).

Positions 26, 30, and 33 each coordinate [4Fe-4S] cluster. S-adenosyl-L-methionine is bound by residues 32–34 (GCY) and G74.

This sequence belongs to the organic radical-activating enzymes family. In terms of assembly, forms a tetramer composed of two NrdD and two NrdG subunits. [4Fe-4S] cluster serves as cofactor.

The protein resides in the cytoplasm. The catalysed reaction is glycyl-[protein] + reduced [flavodoxin] + S-adenosyl-L-methionine = glycin-2-yl radical-[protein] + semiquinone [flavodoxin] + 5'-deoxyadenosine + L-methionine + H(+). Functionally, activation of anaerobic ribonucleoside-triphosphate reductase under anaerobic conditions by generation of an organic free radical, using S-adenosylmethionine and reduced flavodoxin as cosubstrates to produce 5'-deoxy-adenosine. The chain is Anaerobic ribonucleoside-triphosphate reductase-activating protein (nrdG) from Salmonella typhimurium (strain LT2 / SGSC1412 / ATCC 700720).